Reading from the N-terminus, the 512-residue chain is Retinaldehyde dehydrogenase 3 (512 aa).

The disordered stretch occupies residues 1–22 (MATTNGAVENGQPDGKPPALPR). At Ala-2 the chain carries N-acetylalanine. NAD(+) is bound by residues Lys-204, Glu-207, and 257–262 (GSTEVG). Catalysis depends on Glu-280, which acts as the Proton acceptor. Cys-314 acts as the Nucleophile in catalysis. NAD(+) is bound by residues Gln-361 and Glu-411.

Belongs to the aldehyde dehydrogenase family. In terms of assembly, homotetramer. In terms of tissue distribution, detected in embryonic head (at protein level). Ventral retina.

Its subcellular location is the cytoplasm. The enzyme catalyses retinal + NAD(+) + H2O = retinoate + NADH + 2 H(+). It carries out the reaction all-trans-retinal + NAD(+) + H2O = all-trans-retinoate + NADH + 2 H(+). The catalysed reaction is all-trans-13,14-dihydroretinal + NAD(+) + H2O = all-trans-13,14-dihydroretinoate + NADH + 2 H(+). It functions in the pathway cofactor metabolism; retinol metabolism. In terms of biological role, catalyzes the NAD-dependent oxidation of aldehyde substrates, such as all-trans-retinal and all-trans-13,14-dihydroretinal, to their corresponding carboxylic acids, all-trans-retinoate and all-trans-13,14-dihydroretinoate, respectively. High specificity for all-trans-retinal as substrate, can also accept acetaldehyde as substrate in vitro but with lower affinity. Required for the biosynthesis of normal levels of retinoate in the embryonic ocular and nasal regions; a critical lipid in the embryonic development of the eye and the nasal region. The polypeptide is Retinaldehyde dehydrogenase 3 (Aldh1a3) (Mus musculus (Mouse)).